The following is an 805-amino-acid chain: Kinesin-like protein Klp10A (805 aa).

Residues methionine 1–valine 274 are globular. Disordered stretches follow at residues glutamine 68 to glycine 94 and isoleucine 117 to histidine 211. The segment covering alanine 80 to glycine 94 has biased composition (polar residues). Positions serine 123–threonine 136 are enriched in low complexity. Residue serine 157 is modified to Phosphoserine. Over residues glutamine 158–asparagine 179 the composition is skewed to polar residues. The segment covering proline 180–glutamine 200 has biased composition (low complexity). The stretch at alanine 205 to aspartate 244 forms a coiled coil. The Kinesin motor domain maps to glutamine 278–leucine 610. An ATP-binding site is contributed by glycine 368–threonine 375. Threonine 630 is subject to Phosphothreonine. Residues glutamate 633–glycine 688 form a disordered region. The span at leucine 648–alanine 664 shows a compositional bias: polar residues. A compositionally biased stretch (low complexity) spans asparagine 676–glycine 688. Phosphoserine is present on residues serine 795, serine 797, and serine 800.

This sequence belongs to the TRAFAC class myosin-kinesin ATPase superfamily. Kinesin family. MCAK/KIF2 subfamily. In terms of assembly, interacts with Alms1a (via C-terminus). As to expression, expressed in male germline stem cells and spermatogonia (at protein level).

The protein localises to the cytoplasm. It localises to the cytoskeleton. It is found in the microtubule organizing center. The protein resides in the centrosome. Its subcellular location is the spindle pole. The protein localises to the chromosome. It localises to the centromere. Its function is as follows. Required during anaphase to drive sister chromatid separation to promote flux by actively depolymerizing kinetochore microtubules at their pole-associated minus ends, thereby moving chromatids through a 'poleward flux'. Involved in asymmetric cell division of sensory organ precursor (SOP) cells by playing a role in the asymmetric localization of Sara-expressing endosomes to the pIIa daughter cell but not to the pIIb cell. Klp98A targets Sara-expressing endosomes to the central spindle which is symmetrically arranged in early cell division. During late cytokinesis, central spindle asymmetry is generated by enrichment of Patronin on the pIIb side which protects microtubules from depolymerization by Klp10A while unprotected microtubules on the pIIa side are disassembled by Klp10A, leading to the asymmetric delivery of Sara-expressing endosomes to the pIIa daughter cell. In Drosophila melanogaster (Fruit fly), this protein is Kinesin-like protein Klp10A.